A 501-amino-acid polypeptide reads, in one-letter code: UDP-N-acetylmuramoyl-L-alanyl-D-glutamate--2,6-diaminopimelate ligase (501 aa).

Position 29 (Ser29) interacts with UDP-N-acetyl-alpha-D-muramoyl-L-alanyl-D-glutamate. 112–118 (GTNGKTS) is an ATP binding site. UDP-N-acetyl-alpha-D-muramoyl-L-alanyl-D-glutamate-binding positions include 161–162 (TT), Ser188, and Arg196. N6-carboxylysine is present on Lys228. Meso-2,6-diaminopimelate is bound by residues Arg393, 417–420 (DNPR), Gly468, and Glu472. Residues 417-420 (DNPR) carry the Meso-diaminopimelate recognition motif motif.

The protein belongs to the MurCDEF family. MurE subfamily. Mg(2+) serves as cofactor. In terms of processing, carboxylation is probably crucial for Mg(2+) binding and, consequently, for the gamma-phosphate positioning of ATP.

It is found in the cytoplasm. The catalysed reaction is UDP-N-acetyl-alpha-D-muramoyl-L-alanyl-D-glutamate + meso-2,6-diaminopimelate + ATP = UDP-N-acetyl-alpha-D-muramoyl-L-alanyl-gamma-D-glutamyl-meso-2,6-diaminopimelate + ADP + phosphate + H(+). It participates in cell wall biogenesis; peptidoglycan biosynthesis. Its function is as follows. Catalyzes the addition of meso-diaminopimelic acid to the nucleotide precursor UDP-N-acetylmuramoyl-L-alanyl-D-glutamate (UMAG) in the biosynthesis of bacterial cell-wall peptidoglycan. The sequence is that of UDP-N-acetylmuramoyl-L-alanyl-D-glutamate--2,6-diaminopimelate ligase from Acidovorax sp. (strain JS42).